Here is a 110-residue protein sequence, read N- to C-terminus: Large ribosomal subunit protein uL22 (110 aa).

Belongs to the universal ribosomal protein uL22 family. As to quaternary structure, part of the 50S ribosomal subunit.

In terms of biological role, this protein binds specifically to 23S rRNA; its binding is stimulated by other ribosomal proteins, e.g. L4, L17, and L20. It is important during the early stages of 50S assembly. It makes multiple contacts with different domains of the 23S rRNA in the assembled 50S subunit and ribosome. Functionally, the globular domain of the protein is located near the polypeptide exit tunnel on the outside of the subunit, while an extended beta-hairpin is found that lines the wall of the exit tunnel in the center of the 70S ribosome. This chain is Large ribosomal subunit protein uL22, found in Aliivibrio fischeri (strain MJ11) (Vibrio fischeri).